The following is a 122-amino-acid chain: uncharacterized protein (122 aa).

The 111-residue stretch at 10–120 (VFARILRGEI…AGRRLGPMIT (111 aa)) folds into the HIT domain. Positions 104–108 (HLHIH) match the Histidine triad motif motif.

This is an uncharacterized protein from Azospirillum brasilense.